A 151-amino-acid chain; its full sequence is Transcriptional repressor NrdR (151 aa).

A zinc finger lies at 3–34 (CPFCSHPDTQVVETREAEDGGFIRRRRQCGGC). Positions 49–139 (PAIVKKDGRR…VYRSFEDVDD (91 aa)) constitute an ATP-cone domain.

The protein belongs to the NrdR family. Zn(2+) is required as a cofactor.

In terms of biological role, negatively regulates transcription of bacterial ribonucleotide reductase nrd genes and operons by binding to NrdR-boxes. This is Transcriptional repressor NrdR from Delftia acidovorans (strain DSM 14801 / SPH-1).